A 988-amino-acid chain; its full sequence is Isoleucine--tRNA ligase (988 aa).

The 'HIGH' region signature appears at Pro60–His70. Residue Glu570 participates in L-isoleucyl-5'-AMP binding. The 'KMSKS' region motif lies at Lys611–Ser615. Lys614 contributes to the ATP binding site. 4 residues coordinate Zn(2+): Cys957, Cys960, Cys977, and Cys980.

The protein belongs to the class-I aminoacyl-tRNA synthetase family. IleS type 1 subfamily. In terms of assembly, monomer. It depends on Zn(2+) as a cofactor.

The protein resides in the cytoplasm. The enzyme catalyses tRNA(Ile) + L-isoleucine + ATP = L-isoleucyl-tRNA(Ile) + AMP + diphosphate. Functionally, catalyzes the attachment of isoleucine to tRNA(Ile). As IleRS can inadvertently accommodate and process structurally similar amino acids such as valine, to avoid such errors it has two additional distinct tRNA(Ile)-dependent editing activities. One activity is designated as 'pretransfer' editing and involves the hydrolysis of activated Val-AMP. The other activity is designated 'posttransfer' editing and involves deacylation of mischarged Val-tRNA(Ile). This chain is Isoleucine--tRNA ligase, found in Synechocystis sp. (strain ATCC 27184 / PCC 6803 / Kazusa).